The following is a 480-amino-acid chain: Protein nucleotidyltransferase YdiU (480 aa).

ATP contacts are provided by glycine 86, glycine 88, arginine 89, lysine 109, aspartate 121, glycine 122, arginine 172, and arginine 179. The active-site Proton acceptor is the aspartate 248. Positions 249 and 258 each coordinate Mg(2+). Aspartate 258 is a binding site for ATP.

It belongs to the SELO family. Mg(2+) is required as a cofactor. It depends on Mn(2+) as a cofactor.

It catalyses the reaction L-seryl-[protein] + ATP = 3-O-(5'-adenylyl)-L-seryl-[protein] + diphosphate. The enzyme catalyses L-threonyl-[protein] + ATP = 3-O-(5'-adenylyl)-L-threonyl-[protein] + diphosphate. The catalysed reaction is L-tyrosyl-[protein] + ATP = O-(5'-adenylyl)-L-tyrosyl-[protein] + diphosphate. It carries out the reaction L-histidyl-[protein] + UTP = N(tele)-(5'-uridylyl)-L-histidyl-[protein] + diphosphate. It catalyses the reaction L-seryl-[protein] + UTP = O-(5'-uridylyl)-L-seryl-[protein] + diphosphate. The enzyme catalyses L-tyrosyl-[protein] + UTP = O-(5'-uridylyl)-L-tyrosyl-[protein] + diphosphate. Nucleotidyltransferase involved in the post-translational modification of proteins. It can catalyze the addition of adenosine monophosphate (AMP) or uridine monophosphate (UMP) to a protein, resulting in modifications known as AMPylation and UMPylation. This is Protein nucleotidyltransferase YdiU from Enterobacter sp. (strain 638).